Here is a 143-residue protein sequence, read N- to C-terminus: Large ribosomal subunit protein uL11 (143 aa).

The protein belongs to the universal ribosomal protein uL11 family. Part of the ribosomal stalk of the 50S ribosomal subunit. Interacts with L10 and the large rRNA to form the base of the stalk. L10 forms an elongated spine to which L12 dimers bind in a sequential fashion forming a multimeric L10(L12)X complex. Post-translationally, one or more lysine residues are methylated.

Its function is as follows. Forms part of the ribosomal stalk which helps the ribosome interact with GTP-bound translation factors. The protein is Large ribosomal subunit protein uL11 of Borrelia garinii subsp. bavariensis (strain ATCC BAA-2496 / DSM 23469 / PBi) (Borreliella bavariensis).